Here is an 86-residue protein sequence, read N- to C-terminus: Putative regulatory protein OB1501 (86 aa).

The protein belongs to the RemA family.

This is Putative regulatory protein OB1501 from Oceanobacillus iheyensis (strain DSM 14371 / CIP 107618 / JCM 11309 / KCTC 3954 / HTE831).